We begin with the raw amino-acid sequence, 252 residues long: Imidazole glycerol phosphate synthase subunit HisF (252 aa).

Catalysis depends on residues aspartate 11 and aspartate 130.

This sequence belongs to the HisA/HisF family. In terms of assembly, heterodimer of HisH and HisF.

It localises to the cytoplasm. The enzyme catalyses 5-[(5-phospho-1-deoxy-D-ribulos-1-ylimino)methylamino]-1-(5-phospho-beta-D-ribosyl)imidazole-4-carboxamide + L-glutamine = D-erythro-1-(imidazol-4-yl)glycerol 3-phosphate + 5-amino-1-(5-phospho-beta-D-ribosyl)imidazole-4-carboxamide + L-glutamate + H(+). The protein operates within amino-acid biosynthesis; L-histidine biosynthesis; L-histidine from 5-phospho-alpha-D-ribose 1-diphosphate: step 5/9. IGPS catalyzes the conversion of PRFAR and glutamine to IGP, AICAR and glutamate. The HisF subunit catalyzes the cyclization activity that produces IGP and AICAR from PRFAR using the ammonia provided by the HisH subunit. The polypeptide is Imidazole glycerol phosphate synthase subunit HisF (Bacillus thuringiensis (strain Al Hakam)).